Reading from the N-terminus, the 304-residue chain is Retrotransposon Gag-like protein 4 (304 aa).

The CCHC-type zinc-finger motif lies at 276-293; sequence QLCVYCNQAGHFTRDCLA.

In adults, expressed in brain, eye, kidney, ovary and testis. Weakly expressed in thymus, heart and muscle.

In terms of biological role, involved in cognitive function in the brain, possibly via the noradrenergic system. This is Retrotransposon Gag-like protein 4 from Mus musculus (Mouse).